Consider the following 497-residue polypeptide: Di-/tripeptide transporter (497 aa).

The Cytoplasmic segment spans residues Met1 to Arg36. The chain crosses the membrane as a helical span at residues Ala37–Gly55. The Extracellular segment spans residues Leu56–Ile64. The helical transmembrane segment at Val65 to Ala83 threads the bilayer. The Cytoplasmic portion of the chain corresponds to Asp84–Thr92. Residues Ile93–Phe111 form a helical membrane-spanning segment. The Extracellular portion of the chain corresponds to Gly112–Ser115. A helical membrane pass occupies residues Leu116–Ile134. At Ser135–Asn154 the chain is on the cytoplasmic side. The chain crosses the membrane as a helical span at residues Ile155–Thr173. The Extracellular portion of the chain corresponds to Val174–His181. Residues Leu182–Tyr200 form a helical membrane-spanning segment. The Cytoplasmic segment spans residues Gly201–Asn224. Residues Phe225 to Ile243 traverse the membrane as a helical segment. The Extracellular portion of the chain corresponds to Tyr244–Asn254. A helical transmembrane segment spans residues Phe255 to Met273. The Cytoplasmic segment spans residues Met274–Pro293. A helical membrane pass occupies residues Leu294 to Ile312. Topologically, residues Ala313–Pro335 are extracellular. A helical transmembrane segment spans residues Ser336 to Val354. The Cytoplasmic segment spans residues Arg355–Gly372. A helical transmembrane segment spans residues Leu373–Leu391. Residues Asn392–Ser425 lie on the Extracellular side of the membrane. A helical membrane pass occupies residues Thr426–Ala444. Residues Asp445–Arg497 are Cytoplasmic-facing.

This sequence belongs to the major facilitator superfamily. Proton-dependent oligopeptide transporter (POT/PTR) (TC 2.A.17) family.

It localises to the cell membrane. Its function is as follows. Proton-dependent uptake of di- or tri-peptides. The polypeptide is Di-/tripeptide transporter (dtpT) (Lactococcus lactis subsp. cremoris (Streptococcus cremoris)).